We begin with the raw amino-acid sequence, 23 residues long: Cysteine proteinase (23 aa).

Positions 1–10 (ADSLDWREKG) are enriched in basic and acidic residues. The disordered stretch occupies residues 1–23 (ADSLDWREKGVVNSIKDQAQXGS).

This sequence belongs to the peptidase C1 family.

The protein is Cysteine proteinase of Tritrichomonas foetus (Trichomonas foetus).